The following is a 279-amino-acid chain: Thymidylate synthase (279 aa).

132-133 (RR) lines the dUMP pocket. The active-site Nucleophile is the Cys153. DUMP-binding positions include 178–181 (RSND), Asn189, and 219–221 (HIY). Asp181 provides a ligand contact to (6R)-5,10-methylene-5,6,7,8-tetrahydrofolate. A (6R)-5,10-methylene-5,6,7,8-tetrahydrofolate-binding site is contributed by Ala278.

Belongs to the thymidylate synthase family. Bacterial-type ThyA subfamily. Homodimer.

Its subcellular location is the cytoplasm. The catalysed reaction is dUMP + (6R)-5,10-methylene-5,6,7,8-tetrahydrofolate = 7,8-dihydrofolate + dTMP. It participates in pyrimidine metabolism; dTTP biosynthesis. Its function is as follows. Catalyzes the reductive methylation of 2'-deoxyuridine-5'-monophosphate (dUMP) to 2'-deoxythymidine-5'-monophosphate (dTMP) while utilizing 5,10-methylenetetrahydrofolate (mTHF) as the methyl donor and reductant in the reaction, yielding dihydrofolate (DHF) as a by-product. This enzymatic reaction provides an intracellular de novo source of dTMP, an essential precursor for DNA biosynthesis. This Lactococcus lactis subsp. cremoris (strain SK11) protein is Thymidylate synthase.